The following is a 353-amino-acid chain: 4-hydroxy-3-methylbut-2-en-1-yl diphosphate synthase (flavodoxin) (353 aa).

Residues Cys-265, Cys-268, Cys-300, and Glu-307 each coordinate [4Fe-4S] cluster.

The protein belongs to the IspG family. [4Fe-4S] cluster serves as cofactor.

The enzyme catalyses (2E)-4-hydroxy-3-methylbut-2-enyl diphosphate + oxidized [flavodoxin] + H2O + 2 H(+) = 2-C-methyl-D-erythritol 2,4-cyclic diphosphate + reduced [flavodoxin]. It participates in isoprenoid biosynthesis; isopentenyl diphosphate biosynthesis via DXP pathway; isopentenyl diphosphate from 1-deoxy-D-xylulose 5-phosphate: step 5/6. In terms of biological role, converts 2C-methyl-D-erythritol 2,4-cyclodiphosphate (ME-2,4cPP) into 1-hydroxy-2-methyl-2-(E)-butenyl 4-diphosphate. This Sulfurihydrogenibium sp. (strain YO3AOP1) protein is 4-hydroxy-3-methylbut-2-en-1-yl diphosphate synthase (flavodoxin).